A 527-amino-acid polypeptide reads, in one-letter code: Serine/threonine-protein kinase NLK (527 aa).

2 sufficient for interaction with DAPK3 regions span residues Met-1–His-125 and His-124–Ile-416. 2 required for interaction with TAB2 regions span residues Met-1–Gln-304 and Tyr-434–Glu-527. Disordered stretches follow at residues Ala-22 to Ala-72 and Gln-90 to Glu-139. A compositionally biased stretch (basic residues) spans Gly-26–His-54. A compositionally biased stretch (low complexity) spans Pro-103–Ala-119. Residues Lys-122 to His-131 show a composition bias toward basic residues. In terms of domain architecture, Protein kinase spans Ile-138–Leu-427. ATP is bound by residues Ile-144–Val-152 and Lys-167. The active-site Proton acceptor is Asp-264. Phosphothreonine; by autocatalysis is present on Thr-298. The TQE motif lies at Thr-298–Glu-300. Positions Asp-428–Glu-527 are required for homodimerization and kinase activation and localization to the nucleus. Ser-522 is modified (phosphoserine).

Belongs to the protein kinase superfamily. CMGC Ser/Thr protein kinase family. MAP kinase subfamily. As to quaternary structure, homodimer. Homodimerization is required for intermolecular autophosphorylation, kinase activation and nuclear localization. Interacts with RNF138/NARF. Interacts with FOXO1 and FOXO3. Interacts with the upstream activating kinases HIPK2 and MAP3K7/TAK1. Interaction with MAP3K7/TAK1 seems to be indirect, and may be mediated by other proteins such as STAT3, TAB1 and TAB2. Interacts with and phosphorylates a number of transcription factors including FOXO4, LEF1, MYB, MYBL1, MYBL2, NOTCH1 and TCF7L2/TCF4. May interact with components of cullin-RING-based SCF (SKP1-CUL1-F-box protein) E3 ubiquitin-protein ligase complexes. Interacts with MEF2A. Interacts with ATF5; the interaction stabilizes ATF5 at the protein level in a kinase-independent manner. Mg(2+) serves as cofactor. Post-translationally, phosphorylated on Thr-298. Intermolecular autophosphorylation on Thr-298 activates the enzyme. As to expression, expressed at high levels in the brain, and at lower levels in heart, kidney, lung and liver.

It localises to the nucleus. The protein resides in the cytoplasm. The catalysed reaction is L-seryl-[protein] + ATP = O-phospho-L-seryl-[protein] + ADP + H(+). It carries out the reaction L-threonyl-[protein] + ATP = O-phospho-L-threonyl-[protein] + ADP + H(+). Activated by the non-canonical Wnt signaling pathway, in which WNT5A leads to activation of MAP3K7/TAK1 and HIPK2, which subsequently phosphorylates and activates this protein. Activated by dimerization and subsequent intermolecular autophosphorylation on Thr-298. Other cytokines such as IL6 may also activate this regulatory circuit. Serine/threonine-protein kinase that regulates a number of transcription factors with key roles in cell fate determination. Positive effector of the non-canonical Wnt signaling pathway, acting downstream of WNT5A, MAP3K7/TAK1 and HIPK2. Negative regulator of the canonical Wnt/beta-catenin signaling pathway. Binds to and phosphorylates TCF7L2/TCF4 and LEF1, promoting the dissociation of the TCF7L2/LEF1/beta-catenin complex from DNA, as well as the ubiquitination and subsequent proteolysis of LEF1. Together these effects inhibit the transcriptional activation of canonical Wnt/beta-catenin target genes. Negative regulator of the Notch signaling pathway. Binds to and phosphorylates NOTCH1, thereby preventing the formation of a transcriptionally active ternary complex of NOTCH1, RBPJ/RBPSUH and MAML1. Negative regulator of the MYB family of transcription factors. Phosphorylation of MYB leads to its subsequent proteolysis while phosphorylation of MYBL1 and MYBL2 inhibits their interaction with the coactivator CREBBP. Other transcription factors may also be inhibited by direct phosphorylation of CREBBP itself. Acts downstream of IL6 and MAP3K7/TAK1 to phosphorylate STAT3, which is in turn required for activation of NLK by MAP3K7/TAK1. Upon IL1B stimulus, cooperates with ATF5 to activate the transactivation activity of C/EBP subfamily members. Phosphorylates ATF5 but also stabilizes ATF5 protein levels in a kinase-independent manner. Acts as an inhibitor of the mTORC1 complex in response to osmotic stress by mediating phosphorylation of RPTOR, thereby preventing recruitment of the mTORC1 complex to lysosomes. The polypeptide is Serine/threonine-protein kinase NLK (Mus musculus (Mouse)).